Reading from the N-terminus, the 838-residue chain is Ras-interacting protein RIP3 (838 aa).

Disordered stretches follow at residues 66-97 (VSTS…QQQA), 157-290 (KPTT…TSPK), and 305-336 (NSKT…QQQA). Low complexity-rich tracts occupy residues 67 to 97 (STSN…QQQA), 157 to 241 (KPTT…QQKP), and 248 to 284 (PQNI…QQQQ). Positions 310–321 (QKSDKTSEKENK) are enriched in basic and acidic residues. The region spanning 441 to 515 (QLKVRVIEKA…KDEVLVLCPN (75 aa)) is the CRIM domain. 2 disordered regions span residues 522 to 581 (KSSS…QQTQ) and 594 to 646 (QQQQ…GPDA). Composition is skewed to low complexity over residues 537–556 (NNNN…SNNN), 563–581 (QPQQ…QQTQ), and 594–620 (QQQQ…QPDQ). Residues 621 to 631 (VGGGGGGGGGN) are compositionally biased toward gly residues. Residues 648-717 (LVVKITLPDS…GGADLILVSR (70 aa)) enclose the RBD domain.

It belongs to the SIN1 family. In terms of assembly, interacts with activated RasG. Part of a complex, TORC2, consisting of tor, lst8, piaA and ripA. Additional proteins, such as 14-3-3 and heat-shock proteins, may also belong to the TORC2 complex.

Its function is as follows. Component of a Ras-regulated pathway involved in integrating chemotaxis and signal relay pathways that are essential for aggregation. In Dictyostelium discoideum (Social amoeba), this protein is Ras-interacting protein RIP3 (ripA).